Reading from the N-terminus, the 324-residue chain is Probable uridine nucleosidase 1 (324 aa).

His248 is a catalytic residue.

Belongs to the IUNH family.

It is found in the cytoplasm. The catalysed reaction is uridine + H2O = D-ribose + uracil. In terms of biological role, involved in pyrimidine breakdown. In Oryza sativa subsp. japonica (Rice), this protein is Probable uridine nucleosidase 1 (URH1).